A 364-amino-acid chain; its full sequence is Methylthioribose-1-phosphate isomerase (364 aa).

D254 functions as the Proton donor in the catalytic mechanism.

Belongs to the eIF-2B alpha/beta/delta subunits family. MtnA subfamily.

It localises to the cytoplasm. The protein localises to the nucleus. It catalyses the reaction 5-(methylsulfanyl)-alpha-D-ribose 1-phosphate = 5-(methylsulfanyl)-D-ribulose 1-phosphate. It functions in the pathway amino-acid biosynthesis; L-methionine biosynthesis via salvage pathway; L-methionine from S-methyl-5-thio-alpha-D-ribose 1-phosphate: step 1/6. In terms of biological role, catalyzes the interconversion of methylthioribose-1-phosphate (MTR-1-P) into methylthioribulose-1-phosphate (MTRu-1-P). The protein is Methylthioribose-1-phosphate isomerase of Drosophila simulans (Fruit fly).